Consider the following 347-residue polypeptide: MNPLILSMILTTLAMGTMATMLSSNWLLAWMGLEMNMLAMIPILTMNPNPRSTEAATKYFLTQATASMLLMMAIMINFMLSGQWSITKLPNTTVSSMALAALMMKLGLAPFHFWVPEVTQGTSLTSGMILLTWQKLAPLSILYQIDTSVDITILTVSGLLSILVGGWGGLNQTQLRKILAYSSIAHMGWMLIIMPYNPSLTILNLLIYILMTLSIFMIMMNNHSTSTLTLALLWNKAPMMMILLTITLLSLGGLPPLSGFMPKWLIIHELTKNDSIILPMSMAMFALLNLYFYMRLIYSSSLTMFPSTNNMKMKWHFTNRSHLTLLPPLIILSTLTLPLTPFLSILE.

The next 10 helical transmembrane spans lie at 26–46 (WLLA…ILTM), 60–80 (FLTQ…NFML), 96–116 (SMAL…FWVP), 123–143 (SLTS…SILY), 151–171 (ITIL…GGLN), 178–198 (ILAY…PYNP), 200–220 (LTIL…MIMM), 240–260 (MMIL…LSGF), 274–294 (DSII…YFYM), and 325–345 (LLPP…FLSI).

It belongs to the complex I subunit 2 family. Core subunit of respiratory chain NADH dehydrogenase (Complex I) which is composed of 45 different subunits. Interacts with TMEM242.

The protein resides in the mitochondrion inner membrane. The enzyme catalyses a ubiquinone + NADH + 5 H(+)(in) = a ubiquinol + NAD(+) + 4 H(+)(out). Core subunit of the mitochondrial membrane respiratory chain NADH dehydrogenase (Complex I) which catalyzes electron transfer from NADH through the respiratory chain, using ubiquinone as an electron acceptor. Essential for the catalytic activity and assembly of complex I. The sequence is that of NADH-ubiquinone oxidoreductase chain 2 from Dugong dugon (Dugong).